We begin with the raw amino-acid sequence, 272 residues long: Bis(5'-nucleosyl)-tetraphosphatase, symmetrical (272 aa).

It belongs to the Ap4A hydrolase family.

It catalyses the reaction P(1),P(4)-bis(5'-adenosyl) tetraphosphate + H2O = 2 ADP + 2 H(+). Functionally, hydrolyzes diadenosine 5',5'''-P1,P4-tetraphosphate to yield ADP. The protein is Bis(5'-nucleosyl)-tetraphosphatase, symmetrical of Glaesserella parasuis serovar 5 (strain SH0165) (Haemophilus parasuis).